A 163-amino-acid chain; its full sequence is Ribonuclease P protein subunit p25-like protein (163 aa).

2 disordered regions span residues 1–22 (MEHYRKAGSVELPAPSPMPQLP) and 129–163 (NEYGYQPPGAPPDLGPTPASSCGPQPRRRARDTRF). Basic residues predominate over residues 154–163 (PRRRARDTRF).

It belongs to the histone-like Alba family.

It localises to the nucleus. May be a component of ribonuclease P or MRP. This Bos taurus (Bovine) protein is Ribonuclease P protein subunit p25-like protein (RPP25L).